Consider the following 363-residue polypeptide: Putative RAD2-like endonuclease 095R (363 aa).

This sequence belongs to the XPG/RAD2 endonuclease family. Requires Mg(2+) as cofactor.

The protein resides in the host nucleus. Probable endonuclease. In Frog virus 3 (isolate Goorha) (FV-3), this protein is Putative RAD2-like endonuclease 095R.